The sequence spans 506 residues: 2-isopropylmalate synthase (506 aa).

The region spanning 6–267 (IIVFDTTLRD…YTDIVTKEIY (262 aa)) is the Pyruvate carboxyltransferase domain. 4 residues coordinate Mn(2+): Asp15, His201, His203, and Asn237. A regulatory domain region spans residues 391 to 506 (SIQTLSTSSC…LNSYLSMKNR (116 aa)).

This sequence belongs to the alpha-IPM synthase/homocitrate synthase family. LeuA type 1 subfamily. As to quaternary structure, homodimer. It depends on Mn(2+) as a cofactor.

It localises to the cytoplasm. It carries out the reaction 3-methyl-2-oxobutanoate + acetyl-CoA + H2O = (2S)-2-isopropylmalate + CoA + H(+). It participates in amino-acid biosynthesis; L-leucine biosynthesis; L-leucine from 3-methyl-2-oxobutanoate: step 1/4. Its function is as follows. Catalyzes the condensation of the acetyl group of acetyl-CoA with 3-methyl-2-oxobutanoate (2-ketoisovalerate) to form 3-carboxy-3-hydroxy-4-methylpentanoate (2-isopropylmalate). The polypeptide is 2-isopropylmalate synthase (Campylobacter fetus subsp. fetus (strain 82-40)).